The following is a 505-amino-acid chain: Glycerol kinase 1 (505 aa).

T13 lines the ADP pocket. Positions 13, 14, and 15 each coordinate ATP. T13 is a sn-glycerol 3-phosphate binding site. Residue R17 participates in ADP binding. 3 residues coordinate sn-glycerol 3-phosphate: R83, E84, and Y135. R83, E84, and Y135 together coordinate glycerol. At H231 the chain carries Phosphohistidine; by HPr. Position 245 (D245) interacts with sn-glycerol 3-phosphate. Glycerol-binding residues include D245 and Q246. T267 and G310 together coordinate ADP. ATP-binding residues include T267, G310, Q314, and G411. Positions 411 and 415 each coordinate ADP.

It belongs to the FGGY kinase family. In terms of assembly, homotetramer and homodimer (in equilibrium). The phosphoenolpyruvate-dependent sugar phosphotransferase system (PTS), including enzyme I, and histidine-containing protein (HPr) are required for the phosphorylation, which leads to the activation of the enzyme.

It catalyses the reaction glycerol + ATP = sn-glycerol 3-phosphate + ADP + H(+). It functions in the pathway polyol metabolism; glycerol degradation via glycerol kinase pathway; sn-glycerol 3-phosphate from glycerol: step 1/1. Its activity is regulated as follows. Activated by phosphorylation and inhibited by fructose 1,6-bisphosphate (FBP). Key enzyme in the regulation of glycerol uptake and metabolism. Catalyzes the phosphorylation of glycerol to yield sn-glycerol 3-phosphate. This Lactiplantibacillus plantarum (strain ATCC BAA-793 / NCIMB 8826 / WCFS1) (Lactobacillus plantarum) protein is Glycerol kinase 1.